The following is a 473-amino-acid chain: T-box transcription factor TBX6L (473 aa).

The segment at residues 43–217 (LWDKFSSIGT…NNPFAKGFRD (175 aa)) is a DNA-binding region (T-box). The interval 342–361 (RLNPQETHHNSRPKIQLQPP) is disordered.

As to expression, exclusively expressed by ventral mesendoderm.

It is found in the nucleus. Functionally, probable transcriptional regulator involved in developmental processes. This Danio rerio (Zebrafish) protein is T-box transcription factor TBX6L (tbx6l).